A 241-amino-acid chain; its full sequence is MAGHSKWANIKHKKAAQDAKRGKIFTRLIKEITVAARLGGGDPGSNPRLRLAMDKAFGHNMPKDNVERAIKRGCGELEGVNYEEIRYEGYGVSGAAVMVDCMTDNRTRTVADVRHAFTKHGGNLGTDGSVSYLFTHCGQLLFAPDIDEARLLEVALNAGAEDVIDNDDGSLEVITSPDTFVAVRDELEKAAFKAELAEVTWKPENEILLQGDDAAKMQKLLDALEDIDDVQDVYTTAVLDI.

Belongs to the TACO1 family.

Its subcellular location is the cytoplasm. This Nitrosomonas eutropha (strain DSM 101675 / C91 / Nm57) protein is Probable transcriptional regulatory protein Neut_0281.